The chain runs to 101 residues: Anti-sigma factor RshA (101 aa).

The tract at residues 1–20 (MSETEREDERWTPPIGPIDP) is disordered. Residues C25, H51, C55, and C58 each coordinate iron-sulfur cluster. Phosphothreonine is present on T96.

Belongs to the zinc-associated anti-sigma factor (ZAS) superfamily. Interacts with cognate ECF RNA polymerase sigma factor SigH under reducing conditions; the complex is disrupted under oxiding conditions or as temperatures rise. Binding inhibits the interaction of SigH with the RNA polymerase catalytic core. Iron-sulfur cluster is required as a cofactor. Phosphorylated, probably by PknB. Phosphorylation decreases interaction with SigH, probably leading to increased SigH-mediated transcription.

Its function is as follows. A redox-regulated anti-sigma factor for cognate extracytoplasmic function (ECF) sigma factor SigH. ECF sigma factors are held in an inactive form by an anti-sigma factor. Overexpression leads to increased susceptibility to diamide. The sequence is that of Anti-sigma factor RshA (rshA) from Mycolicibacterium smegmatis (strain ATCC 700084 / mc(2)155) (Mycobacterium smegmatis).